Here is a 94-residue protein sequence, read N- to C-terminus: Protein translocase subunit SecE (94 aa).

The segment at 1 to 32 (MTDAVGSIDMPDAQDEAPDSKKSRKGGKRGKK) is disordered. The segment covering 22 to 32 (KSRKGGKRGKK) has biased composition (basic residues). A helical transmembrane segment spans residues 65–85 (TVVIIFVVIMIGLVTLIDYGF).

This sequence belongs to the SecE/SEC61-gamma family. Component of the Sec protein translocase complex. Heterotrimer consisting of SecY, SecE and SecG subunits. The heterotrimers can form oligomers, although 1 heterotrimer is thought to be able to translocate proteins. Interacts with the ribosome. Interacts with SecDF, and other proteins may be involved. Interacts with SecA.

It localises to the cell membrane. Essential subunit of the Sec protein translocation channel SecYEG. Clamps together the 2 halves of SecY. May contact the channel plug during translocation. The polypeptide is Protein translocase subunit SecE (Streptomyces coelicolor (strain ATCC BAA-471 / A3(2) / M145)).